A 68-amino-acid chain; its full sequence is Beta-defensin 1 (68 aa).

An N-terminal signal peptide occupies residues 1–21; sequence MRTSYLLLFILCLVLCDMDSG. The propeptide occupies 22–32; sequence DTFLTGLGHRS. Cystine bridges form between cysteine 37/cysteine 66, cysteine 44/cysteine 59, and cysteine 49/cysteine 67.

It belongs to the beta-defensin family. Monomer. Homodimer.

The protein resides in the secreted. It is found in the membrane. Its function is as follows. Has bactericidal activity. May act as a ligand for C-C chemokine receptor CCR6. Positively regulates the sperm motility and bactericidal activity in a CCR6-dependent manner. Binds to CCR6 and triggers Ca2+ mobilization in the sperm which is important for its motility. The protein is Beta-defensin 1 (DEFB1) of Saguinus oedipus (Cotton-top tamarin).